The following is an 87-amino-acid chain: HssA/B-like protein 56 (87 aa).

This sequence belongs to the hssA/B family.

This is HssA/B-like protein 56 (hssl56) from Dictyostelium discoideum (Social amoeba).